The following is a 168-amino-acid chain: MSWWSGVWRSVWSALSREVREHVGTDHLGNKYYYVAEYKNWRGQTIREKRIVEAANRKEVDYEAGDIPTEWEAWIRRTRKTPPTMEEILKNEKYREEIKIKSQDFYEKDKLGKETSEELLPSPTATQVKGHASAPYFGREEPSVAPTSTGKTFQPGSWTPEDGKRQSQ.

Residues 112 to 168 (GKETSEELLPSPTATQVKGHASAPYFGREEPSVAPTSTGKTFQPGSWTPEDGKRQSQ) are disordered. A Phosphoserine modification is found at serine 133. Polar residues predominate over residues 145–157 (APTSTGKTFQPGS).

This sequence belongs to the complex I NDUFA12 subunit family. Interacts with ARMC9.

The protein resides in the mitochondrion. Its function is as follows. Acts as a molecular chaperone for mitochondrial complex I assembly. Complex I functions in the transfer of electrons from NADH to the respiratory chain. The immediate electron acceptor for the enzyme is believed to be ubiquinone. Is involved in the initial steps of cilia formation, including removal of CP110 from the mother centrioles, docking of membrane vesicles to the mother centrioles, and establishment of the transition zone. This is NADH dehydrogenase [ubiquinone] 1 alpha subcomplex assembly factor 2 (Ndufaf2) from Mus musculus (Mouse).